A 169-amino-acid polypeptide reads, in one-letter code: Biogenesis of lysosome-related organelles complex 1 subunit 4 (169 aa).

It belongs to the BLOC1S4 family. In terms of assembly, component of the biogenesis of lysosome-related organelles complex-1 (BLOC-1) composed of Blos1, Blos2, Blos3, Blos4, Dysb, Muted, Pldn and Snapin. Interacts with Pldn.

Its function is as follows. Component of the biogenesis of lysosome-related organelles complex-1 (BLOC-1) involved in pigment granule biogenesis. The sequence is that of Biogenesis of lysosome-related organelles complex 1 subunit 4 from Drosophila melanogaster (Fruit fly).